Reading from the N-terminus, the 183-residue chain is Cell division protein SepF (183 aa).

The interval 149 to 183 is disordered; sequence SSEESAAPSVMAREEEATAPAAPSPAWGTQDAING.

It belongs to the SepF family. Homodimer. Interacts with FtsZ.

Its subcellular location is the cytoplasm. Its function is as follows. Cell division protein that is part of the divisome complex and is recruited early to the Z-ring. Probably stimulates Z-ring formation, perhaps through the cross-linking of FtsZ protofilaments. Its function overlaps with FtsA. This Synechococcus sp. (strain RCC307) protein is Cell division protein SepF.